The chain runs to 508 residues: BTB/POZ domain-containing protein At3g03510 (508 aa).

Residues 11–77 (QDLDLYVKGV…CYGYKIELSA (67 aa)) enclose the BTB domain. One can recognise an NPH3 domain in the interval 156–414 (TRLLQDLITL…MQVLFVSQMQ (259 aa)). Y355 carries the phosphotyrosine modification.

This sequence belongs to the NPH3 family.

Its pathway is protein modification; protein ubiquitination. May act as a substrate-specific adapter of an E3 ubiquitin-protein ligase complex (CUL3-RBX1-BTB) which mediates the ubiquitination and subsequent proteasomal degradation of target proteins. The protein is BTB/POZ domain-containing protein At3g03510 of Arabidopsis thaliana (Mouse-ear cress).